Here is a 140-residue protein sequence, read N- to C-terminus: Transmembrane protein 234 homolog (140 aa).

4 helical membrane-spanning segments follow: residues 14–34 (IYAV…NPFI), 64–84 (WQYL…VLTL), 88–108 (ELSL…AITA), and 116–136 (SGWK…ICGL).

It belongs to the TMEM234 family.

The protein localises to the membrane. This is Transmembrane protein 234 homolog from Anopheles gambiae (African malaria mosquito).